The sequence spans 418 residues: Thyroxine-binding globulin (418 aa).

The N-terminal stretch at 1 to 20 (MSMFFYLFLLVLGLQATIHC) is a signal peptide. N-linked (GlcNAc...) asparagine glycans are attached at residues asparagine 24, asparagine 39, asparagine 102, asparagine 168, asparagine 227, and asparagine 256. Asparagine 296 and lysine 401 together coordinate thyroxine.

The protein belongs to the serpin family. In terms of tissue distribution, expressed by the liver and secreted in plasma.

The protein resides in the secreted. Major thyroid hormone transport protein in serum. This is Thyroxine-binding globulin (Serpina7) from Rattus norvegicus (Rat).